We begin with the raw amino-acid sequence, 391 residues long: uncharacterized protein (391 aa).

This sequence belongs to the mimivirus L17x/L18x family.

This is an uncharacterized protein from Acanthamoeba polyphaga (Amoeba).